The following is a 792-amino-acid chain: Phenylalanine--tRNA ligase beta subunit (792 aa).

The tRNA-binding domain occupies N38–F148. Positions E406–E482 constitute a B5 domain. Mg(2+)-binding residues include D460, D466, E469, and E470. Residues Y698–R790 form the FDX-ACB domain.

This sequence belongs to the phenylalanyl-tRNA synthetase beta subunit family. Type 1 subfamily. Tetramer of two alpha and two beta subunits. Mg(2+) is required as a cofactor.

The protein resides in the cytoplasm. The enzyme catalyses tRNA(Phe) + L-phenylalanine + ATP = L-phenylalanyl-tRNA(Phe) + AMP + diphosphate + H(+). This is Phenylalanine--tRNA ligase beta subunit from Wolbachia sp. subsp. Brugia malayi (strain TRS).